A 249-amino-acid polypeptide reads, in one-letter code: Segregation and condensation protein A (249 aa).

The protein belongs to the ScpA family. In terms of assembly, component of a cohesin-like complex composed of ScpA, ScpB and the Smc homodimer, in which ScpA and ScpB bind to the head domain of Smc. The presence of the three proteins is required for the association of the complex with DNA.

It localises to the cytoplasm. Functionally, participates in chromosomal partition during cell division. May act via the formation of a condensin-like complex containing Smc and ScpB that pull DNA away from mid-cell into both cell halves. This Listeria monocytogenes serotype 4b (strain CLIP80459) protein is Segregation and condensation protein A.